The following is a 187-amino-acid chain: Elongation factor P (187 aa).

The protein belongs to the elongation factor P family.

It localises to the cytoplasm. Its pathway is protein biosynthesis; polypeptide chain elongation. Involved in peptide bond synthesis. Stimulates efficient translation and peptide-bond synthesis on native or reconstituted 70S ribosomes in vitro. Probably functions indirectly by altering the affinity of the ribosome for aminoacyl-tRNA, thus increasing their reactivity as acceptors for peptidyl transferase. The sequence is that of Elongation factor P from Mycolicibacterium smegmatis (strain ATCC 700084 / mc(2)155) (Mycobacterium smegmatis).